The following is a 633-amino-acid chain: Heterogeneous nuclear ribonucleoprotein R (633 aa).

Residues 1 to 24 are disordered; the sequence is MANQVNGNAVQLKEEEEPMDTSSV. Position 2 is an N-acetylalanine (alanine 2). Residues lysine 13 and lysine 171 each participate in a glycyl lysine isopeptide (Lys-Gly) (interchain with G-Cter in SUMO2) cross-link. 3 RRM domains span residues 165–244, 246–328, and 341–411; these read TEVF…ISVA, NRLF…WADP, and KVLF…LAKP. Residue lysine 359 forms a Glycyl lysine isopeptide (Lys-Gly) (interchain with G-Cter in SUMO2) linkage. Residue lysine 366 is modified to N6-acetyllysine. A Nuclear localization signal motif is present at residues 412-418; the sequence is PDKKRKE. The tract at residues 412–456 is disordered; it reads PDKKRKERQAARQASRSTAYEDYYYHPPPRMPPPIRGRGRGGGRG. Over residues 437 to 446 the composition is skewed to pro residues; the sequence is HPPPRMPPPI. The RNA-binding RGG-box stretch occupies residues 447–567; it reads RGRGRGGGRG…SRGSRGNRGG (121 aa). The 1; approximate repeat unit spans residues 462–471; the sequence is PDYYGYEDYY. The tract at residues 462–497 is 3 X 11 AA approximate repeats of D-D-Y-Y-G-Y-D-Y-H-D-Y; it reads PDYYGYEDYYDDYYGYDYHDYRGGYEDPYYGYDDGY. The stretch at 472–482 is repeat 2; that stretch reads DDYYGYDYHDY. Residues 488–497 form a 3; approximate repeat; sequence DPYYGYDDGY. Residues 501 to 510 are compositionally biased toward gly residues; the sequence is GRGGGRGGRG. Residues 501 to 633 are disordered; it reads GRGGGRGGRG…YQDTYGQQWK (133 aa). Pro residues predominate over residues 511–524; that stretch reads APPPPRGRGAPPPR. Residues 525 to 541 show a composition bias toward low complexity; that stretch reads GRAGYSQRGAPLGPPRG. The span at 558-570 shows a compositional bias: gly residues; that stretch reads SRGSRGNRGGNVG. Polar residues predominate over residues 588–604; it reads TNNQQNWGSQPIAQQPL. Low complexity predominate over residues 605 to 621; that stretch reads QQGGDYSGNYGYNNDNQ. Positions 622 to 633 are enriched in polar residues; sequence EFYQDTYGQQWK.

Identified in the spliceosome C complex. Identified in a IGF2BP1-dependent mRNP granule complex containing untranslated mRNAs. Interacts with GTPBP1.

It localises to the nucleus. The protein localises to the microsome. The protein resides in the nucleoplasm. Its subcellular location is the cytoplasm. Its function is as follows. Component of ribonucleosomes, which are complexes of at least 20 other different heterogeneous nuclear ribonucleoproteins (hnRNP). hnRNP play an important role in processing of precursor mRNA in the nucleus. The sequence is that of Heterogeneous nuclear ribonucleoprotein R (HNRNPR) from Homo sapiens (Human).